A 506-amino-acid chain; its full sequence is Histidine--tRNA ligase (506 aa).

Belongs to the class-II aminoacyl-tRNA synthetase family. In terms of assembly, homodimer.

It is found in the cytoplasm. It carries out the reaction tRNA(His) + L-histidine + ATP = L-histidyl-tRNA(His) + AMP + diphosphate + H(+). This Bradyrhizobium diazoefficiens (strain JCM 10833 / BCRC 13528 / IAM 13628 / NBRC 14792 / USDA 110) protein is Histidine--tRNA ligase (hisS).